We begin with the raw amino-acid sequence, 504 residues long: L-carnitine/gamma-butyrobetaine antiporter (504 aa).

12 helical membrane-spanning segments follow: residues 10–30 (IEPK…WLTV), 51–71 (WGWA…WLVF), 92–112 (IFMM…SIEI), 143–163 (GPLP…FFFV), 195–215 (FYLV…TPLV), 231–251 (LDAI…ACGL), 263–283 (SYLS…SFIM), 316–336 (WTVF…IFLA), 347–367 (LCFG…TVLG), 398–418 (WAAL…CFIA), 446–466 (LLVR…LLAL), and 475–495 (AIIA…LSFI).

It belongs to the BCCT transporter (TC 2.A.15) family. CaiT subfamily. Homotrimer.

The protein resides in the cell inner membrane. It catalyses the reaction 4-(trimethylamino)butanoate(in) + (R)-carnitine(out) = 4-(trimethylamino)butanoate(out) + (R)-carnitine(in). Its pathway is amine and polyamine metabolism; carnitine metabolism. Catalyzes the exchange of L-carnitine for gamma-butyrobetaine. This is L-carnitine/gamma-butyrobetaine antiporter from Shigella flexneri serotype 5b (strain 8401).